We begin with the raw amino-acid sequence, 63 residues long: Large ribosomal subunit protein bL28 (63 aa).

Belongs to the bacterial ribosomal protein bL28 family.

This is Large ribosomal subunit protein bL28 from Symbiobacterium thermophilum (strain DSM 24528 / JCM 14929 / IAM 14863 / T).